A 508-amino-acid chain; its full sequence is Photosystem II CP47 reaction center protein (508 aa).

A run of 6 helical transmembrane segments spans residues 21-36 (SVHIMHTALVSGWAGS), 101-115 (IVFSGLCFLAAIWHW), 140-156 (GIHLFLSGVACFGFGAF), 203-218 (IAAGTLGILAGLFHLS), 237-252 (VLSSSIAAVFFAAFVV), and 457-472 (SFALLFFFGHIWHGAR).

It belongs to the PsbB/PsbC family. PsbB subfamily. PSII is composed of 1 copy each of membrane proteins PsbA, PsbB, PsbC, PsbD, PsbE, PsbF, PsbH, PsbI, PsbJ, PsbK, PsbL, PsbM, PsbT, PsbX, PsbY, PsbZ, Psb30/Ycf12, at least 3 peripheral proteins of the oxygen-evolving complex and a large number of cofactors. It forms dimeric complexes. It depends on Binds multiple chlorophylls. PSII binds additional chlorophylls, carotenoids and specific lipids. as a cofactor.

It is found in the plastid. It localises to the chloroplast thylakoid membrane. Functionally, one of the components of the core complex of photosystem II (PSII). It binds chlorophyll and helps catalyze the primary light-induced photochemical processes of PSII. PSII is a light-driven water:plastoquinone oxidoreductase, using light energy to abstract electrons from H(2)O, generating O(2) and a proton gradient subsequently used for ATP formation. This is Photosystem II CP47 reaction center protein from Platanus occidentalis (Sycamore).